The following is a 568-amino-acid chain: Periplasmic trehalase (568 aa).

Positions 1 to 38 (MPHAPARSGDAMSAAAPPCCTSLLGLSLSMFVAPCALA) are cleaved as a signal peptide. Substrate-binding positions include Arg-169, 176–177 (WD), Asn-213, 222–224 (RSQ), 294–296 (RPE), and Gly-327. Residues Asp-329 and Glu-511 each act as proton donor/acceptor in the active site. Glu-526 serves as a coordination point for substrate.

Belongs to the glycosyl hydrolase 37 family.

It is found in the periplasm. It catalyses the reaction alpha,alpha-trehalose + H2O = alpha-D-glucose + beta-D-glucose. Functionally, provides the cells with the ability to utilize trehalose at high osmolarity by splitting it into glucose molecules that can subsequently be taken up by the phosphotransferase-mediated uptake system. The chain is Periplasmic trehalase from Xanthomonas campestris pv. campestris (strain 8004).